The following is a 207-amino-acid chain: Urease accessory protein UreG (207 aa).

14–21 (GPVGSGKT) provides a ligand contact to GTP.

Belongs to the SIMIBI class G3E GTPase family. UreG subfamily. As to quaternary structure, homodimer. UreD, UreF and UreG form a complex that acts as a GTP-hydrolysis-dependent molecular chaperone, activating the urease apoprotein by helping to assemble the nickel containing metallocenter of UreC. The UreE protein probably delivers the nickel.

The protein resides in the cytoplasm. Functionally, facilitates the functional incorporation of the urease nickel metallocenter. This process requires GTP hydrolysis, probably effectuated by UreG. This Pseudomonas putida (strain GB-1) protein is Urease accessory protein UreG.